The sequence spans 250 residues: tRNA pseudouridine synthase A (250 aa).

Residue Asp52 is the Nucleophile of the active site. Tyr110 is a binding site for substrate.

Belongs to the tRNA pseudouridine synthase TruA family. In terms of assembly, homodimer.

The catalysed reaction is uridine(38/39/40) in tRNA = pseudouridine(38/39/40) in tRNA. In terms of biological role, formation of pseudouridine at positions 38, 39 and 40 in the anticodon stem and loop of transfer RNAs. This Citrifermentans bemidjiense (strain ATCC BAA-1014 / DSM 16622 / JCM 12645 / Bem) (Geobacter bemidjiensis) protein is tRNA pseudouridine synthase A.